The primary structure comprises 64 residues: Large ribosomal subunit protein bL33c (64 aa).

Belongs to the bacterial ribosomal protein bL33 family.

It localises to the plastid. It is found in the chloroplast. In Huperzia lucidula (Shining clubmoss), this protein is Large ribosomal subunit protein bL33c.